Reading from the N-terminus, the 121-residue chain is Cysteine-rich neurotrophic factor (121 aa).

An N-terminal signal peptide occupies residues 1 to 18 (MLLKLIVALSLTLTLASA). The N-linked (GlcNAc...) asparagine glycan is linked to Asn-57.

Its subcellular location is the secreted. Its function is as follows. Interacts with the p75 low-affinity neurotrophin receptor. Evokes neurite outgrowth and modulated calcium currents in pedal motor neurons. May be involved in target-derived trophic support for motor neurons. This Lymnaea stagnalis (Great pond snail) protein is Cysteine-rich neurotrophic factor.